The following is a 100-amino-acid chain: Nucleoid-associated protein MYPU_0500 (100 aa).

The protein belongs to the YbaB/EbfC family. Homodimer.

The protein localises to the cytoplasm. It is found in the nucleoid. Functionally, binds to DNA and alters its conformation. May be involved in regulation of gene expression, nucleoid organization and DNA protection. The protein is Nucleoid-associated protein MYPU_0500 of Mycoplasmopsis pulmonis (strain UAB CTIP) (Mycoplasma pulmonis).